Here is a 285-residue protein sequence, read N- to C-terminus: 2,3,4,5-tetrahydropyridine-2,6-dicarboxylate N-succinyltransferase (285 aa).

Substrate-binding residues include arginine 111 and aspartate 148.

This sequence belongs to the transferase hexapeptide repeat family. As to quaternary structure, homotrimer.

The protein resides in the cytoplasm. The catalysed reaction is (S)-2,3,4,5-tetrahydrodipicolinate + succinyl-CoA + H2O = (S)-2-succinylamino-6-oxoheptanedioate + CoA. The protein operates within amino-acid biosynthesis; L-lysine biosynthesis via DAP pathway; LL-2,6-diaminopimelate from (S)-tetrahydrodipicolinate (succinylase route): step 1/3. The chain is 2,3,4,5-tetrahydropyridine-2,6-dicarboxylate N-succinyltransferase from Rhizobium meliloti (strain 1021) (Ensifer meliloti).